Consider the following 459-residue polypeptide: Glycosyl hydrolase family 109 protein (459 aa).

Residues 1 to 31 constitute a signal peptide (tat-type signal); that stretch reads MHNIHRRHFLKAAGAVTAGLITANITASTHA. NAD(+) contacts are provided by residues 64 to 65, aspartate 86, 135 to 138, 155 to 156, and asparagine 184; these read ER, WEWH, and EV. Substrate is bound by residues tyrosine 213, arginine 232, 244-247, and tyrosine 326; that span reads YPTH. Residue tyrosine 244 coordinates NAD(+).

Belongs to the Gfo/Idh/MocA family. Glycosyl hydrolase 109 subfamily. The cofactor is NAD(+). In terms of processing, predicted to be exported by the Tat system. The position of the signal peptide cleavage has not been experimentally proven.

In terms of biological role, glycosidase. The chain is Glycosyl hydrolase family 109 protein from Shewanella putrefaciens (strain CN-32 / ATCC BAA-453).